We begin with the raw amino-acid sequence, 349 residues long: Methylthioribose-1-phosphate isomerase (349 aa).

Residues 51–53 (RGA), Arg94, and Gln199 contribute to the substrate site. Asp240 (proton donor) is an active-site residue. 250–251 (NK) is a substrate binding site.

It belongs to the EIF-2B alpha/beta/delta subunits family. MtnA subfamily. As to quaternary structure, homodimer.

The enzyme catalyses 5-(methylsulfanyl)-alpha-D-ribose 1-phosphate = 5-(methylsulfanyl)-D-ribulose 1-phosphate. It participates in amino-acid biosynthesis; L-methionine biosynthesis via salvage pathway; L-methionine from S-methyl-5-thio-alpha-D-ribose 1-phosphate: step 1/6. Functionally, catalyzes the interconversion of methylthioribose-1-phosphate (MTR-1-P) into methylthioribulose-1-phosphate (MTRu-1-P). In Bacillus mycoides (strain KBAB4) (Bacillus weihenstephanensis), this protein is Methylthioribose-1-phosphate isomerase.